Reading from the N-terminus, the 235-residue chain is Homeobox protein Nkx-2.8 (235 aa).

Residues 51-67 (SDESGLETSPADSSQLA) show a composition bias toward polar residues. Residues 51–86 (SDESGLETSPADSSQLASLRRESPGSDPEKRRKRRV) form a disordered region. The span at 69-80 (LRRESPGSDPEK) shows a compositional bias: basic and acidic residues. The segment at residues 81–140 (RRKRRVLFSKAQTLELERRFRQQRYLSAPEREQLARLLRLTPTQVKIWFQNHRYKLKRGR) is a DNA-binding region (homeobox).

Belongs to the NK-2 homeobox family. As to expression, prominent expression in ventral brain and neural tube structures.

The protein localises to the nucleus. Its function is as follows. Possible role in the specification of a distinct subset of neurons. This is Homeobox protein Nkx-2.8 (Nkx2-8) from Mus musculus (Mouse).